A 124-amino-acid polypeptide reads, in one-letter code: Large ribosomal subunit protein bL12 (124 aa).

The protein belongs to the bacterial ribosomal protein bL12 family. In terms of assembly, homodimer. Part of the ribosomal stalk of the 50S ribosomal subunit. Forms a multimeric L10(L12)X complex, where L10 forms an elongated spine to which 2 to 4 L12 dimers bind in a sequential fashion. Binds GTP-bound translation factors.

In terms of biological role, forms part of the ribosomal stalk which helps the ribosome interact with GTP-bound translation factors. Is thus essential for accurate translation. The protein is Large ribosomal subunit protein bL12 of Nautilia profundicola (strain ATCC BAA-1463 / DSM 18972 / AmH).